The chain runs to 517 residues: 3-hydroxyphenylacetate 6-hydroxylase (517 aa).

Heme is bound at residue cysteine 449.

This sequence belongs to the cytochrome P450 family.

It carries out the reaction 3-hydroxyphenylacetate + NADH + O2 + H(+) = homogentisate + NAD(+) + H2O. The catalysed reaction is 3-hydroxyphenylacetate + NADPH + O2 + H(+) = homogentisate + NADP(+) + H2O. The enzyme catalyses 3,4-dihydroxyphenylacetate + NADH + O2 + H(+) = 2,4,5-trihydroxyphenylacetate + NAD(+) + H2O. It catalyses the reaction 3,4-dihydroxyphenylacetate + NADPH + O2 + H(+) = 2,4,5-trihydroxyphenylacetate + NADP(+) + H2O. It participates in aromatic compound metabolism; phenylacetate degradation. In terms of biological role, catalyzes the hydroxylation of 3-hydroxyphenylacetate and 3,4-dihydroxyphenylacetate to 2,5-dihydroxyphenylacetate (homogentisate) and 2,4,5-trihydroxyphenylacetate, respectively. Both of these compounds are used as substrate by homogentisate dioxygenase in the homogentisate pathway. The homogentisate pathway is used to catabolize phenylacetate and use it as a carbon source. Can also catalyze the hydroxylation of phenylacetate to 2-hydroxyphenylacetate at low efficiency to compensate for loss of phacA. The protein is 3-hydroxyphenylacetate 6-hydroxylase (phacB) of Emericella nidulans (Aspergillus nidulans).